Consider the following 252-residue polypeptide: 14-3-3 protein 7 (252 aa).

It belongs to the 14-3-3 family. As to quaternary structure, homodimer.

This chain is 14-3-3 protein 7 (TFT7), found in Solanum lycopersicum (Tomato).